We begin with the raw amino-acid sequence, 679 residues long: DNA ligase (679 aa).

Residues Asp86 to Asp90 and Ser129 to Thr130 each bind NAD(+). Lys167 serves as the catalytic N6-AMP-lysine intermediate. NAD(+) is bound by residues Arg183, Glu214, and Lys326. Residues Cys417, Cys420, Cys433, and Cys439 each contribute to the Zn(2+) site. Residues Gly599 to Asp679 enclose the BRCT domain.

Belongs to the NAD-dependent DNA ligase family. LigA subfamily. The cofactor is Mg(2+). Mn(2+) serves as cofactor.

The enzyme catalyses NAD(+) + (deoxyribonucleotide)n-3'-hydroxyl + 5'-phospho-(deoxyribonucleotide)m = (deoxyribonucleotide)n+m + AMP + beta-nicotinamide D-nucleotide.. Functionally, DNA ligase that catalyzes the formation of phosphodiester linkages between 5'-phosphoryl and 3'-hydroxyl groups in double-stranded DNA using NAD as a coenzyme and as the energy source for the reaction. It is essential for DNA replication and repair of damaged DNA. This is DNA ligase from Desulfotalea psychrophila (strain LSv54 / DSM 12343).